A 1295-amino-acid chain; its full sequence is Phosphoribosylformylglycinamidine synthase (1295 aa).

The interval 305-327 is disordered; it reads WPGAATGSGGEIRDEGATGRGAK. ATP-binding positions include 307 to 318, 386 to 388, and A678; these read GAATGSGGEIRD and TGY. Residues D679, E718, N722, and D884 each contribute to the Mg(2+) site. Residue S886 participates in ATP binding. The Glutamine amidotransferase type-1 domain maps to 1042 to 1295; sequence VAVLREQGVN…IFRNARKQLG (254 aa). Catalysis depends on C1135, which acts as the Nucleophile. Residues H1260 and E1262 contribute to the active site.

The protein in the N-terminal section; belongs to the FGAMS family. In terms of assembly, monomer.

It is found in the cytoplasm. The enzyme catalyses N(2)-formyl-N(1)-(5-phospho-beta-D-ribosyl)glycinamide + L-glutamine + ATP + H2O = 2-formamido-N(1)-(5-O-phospho-beta-D-ribosyl)acetamidine + L-glutamate + ADP + phosphate + H(+). It functions in the pathway purine metabolism; IMP biosynthesis via de novo pathway; 5-amino-1-(5-phospho-D-ribosyl)imidazole from N(2)-formyl-N(1)-(5-phospho-D-ribosyl)glycinamide: step 1/2. Functionally, phosphoribosylformylglycinamidine synthase involved in the purines biosynthetic pathway. Catalyzes the ATP-dependent conversion of formylglycinamide ribonucleotide (FGAR) and glutamine to yield formylglycinamidine ribonucleotide (FGAM) and glutamate. This chain is Phosphoribosylformylglycinamidine synthase, found in Salmonella paratyphi A (strain ATCC 9150 / SARB42).